The sequence spans 657 residues: Wall-associated receptor kinase-like 20 (657 aa).

Positions 1 to 23 (MEKKRSYYALLIPTLLTVWLACA) are cleaved as a signal peptide. The Extracellular segment spans residues 24-293 (GHSCARHAKA…KHCKKKKKTV (270 aa)). N140 is a glycosylation site (N-linked (GlcNAc...) asparagine). The helical transmembrane segment at 294-314 (VFAGAAVAVVGVTLAIAVAVI) threads the bilayer. Over 315-657 (GTKHSHQKVK…NILSQEVTET (343 aa)) the chain is Cytoplasmic. The 284-residue stretch at 363–646 (FSKDNLIGTG…KEVADEIEYI (284 aa)) folds into the Protein kinase domain. ATP-binding positions include 369–377 (IGTGGFGEV) and K391. D490 functions as the Proton acceptor in the catalytic mechanism.

Belongs to the protein kinase superfamily. Ser/Thr protein kinase family.

The protein localises to the membrane. The enzyme catalyses L-seryl-[protein] + ATP = O-phospho-L-seryl-[protein] + ADP + H(+). The catalysed reaction is L-threonyl-[protein] + ATP = O-phospho-L-threonyl-[protein] + ADP + H(+). In terms of biological role, serine/threonine-protein kinase that may function as a signaling receptor of extracellular matrix component. The protein is Wall-associated receptor kinase-like 20 (WAKL20) of Arabidopsis thaliana (Mouse-ear cress).